A 298-amino-acid polypeptide reads, in one-letter code: Aspartate carbamoyltransferase catalytic subunit (298 aa).

Carbamoyl phosphate is bound by residues Arg-53 and Thr-54. Lys-81 is an L-aspartate binding site. The carbamoyl phosphate site is built by Arg-103, His-132, and Gln-135. Positions 166 and 218 each coordinate L-aspartate. Residues Gly-259 and Pro-260 each contribute to the carbamoyl phosphate site.

This sequence belongs to the aspartate/ornithine carbamoyltransferase superfamily. ATCase family. In terms of assembly, heterododecamer (2C3:3R2) of six catalytic PyrB chains organized as two trimers (C3), and six regulatory PyrI chains organized as three dimers (R2).

It catalyses the reaction carbamoyl phosphate + L-aspartate = N-carbamoyl-L-aspartate + phosphate + H(+). Its pathway is pyrimidine metabolism; UMP biosynthesis via de novo pathway; (S)-dihydroorotate from bicarbonate: step 2/3. Its function is as follows. Catalyzes the condensation of carbamoyl phosphate and aspartate to form carbamoyl aspartate and inorganic phosphate, the committed step in the de novo pyrimidine nucleotide biosynthesis pathway. This Anaplasma marginale (strain St. Maries) protein is Aspartate carbamoyltransferase catalytic subunit.